Here is a 347-residue protein sequence, read N- to C-terminus: Methylthioribose-1-phosphate isomerase (347 aa).

Residues 45-47 (RGA), arginine 88, and glutamine 197 contribute to the substrate site. The Proton donor role is filled by aspartate 238. 248–249 (NK) serves as a coordination point for substrate.

It belongs to the eIF-2B alpha/beta/delta subunits family. MtnA subfamily.

It catalyses the reaction 5-(methylsulfanyl)-alpha-D-ribose 1-phosphate = 5-(methylsulfanyl)-D-ribulose 1-phosphate. The protein operates within amino-acid biosynthesis; L-methionine biosynthesis via salvage pathway; L-methionine from S-methyl-5-thio-alpha-D-ribose 1-phosphate: step 1/6. Its function is as follows. Catalyzes the interconversion of methylthioribose-1-phosphate (MTR-1-P) into methylthioribulose-1-phosphate (MTRu-1-P). The sequence is that of Methylthioribose-1-phosphate isomerase from Trichormus variabilis (strain ATCC 29413 / PCC 7937) (Anabaena variabilis).